Reading from the N-terminus, the 167-residue chain is Peptide deformylase (167 aa).

Fe cation contacts are provided by Cys91 and His133. Glu134 is a catalytic residue. His137 lines the Fe cation pocket.

Belongs to the polypeptide deformylase family. The cofactor is Fe(2+).

The enzyme catalyses N-terminal N-formyl-L-methionyl-[peptide] + H2O = N-terminal L-methionyl-[peptide] + formate. Functionally, removes the formyl group from the N-terminal Met of newly synthesized proteins. Requires at least a dipeptide for an efficient rate of reaction. N-terminal L-methionine is a prerequisite for activity but the enzyme has broad specificity at other positions. The chain is Peptide deformylase from Nitrosococcus oceani (strain ATCC 19707 / BCRC 17464 / JCM 30415 / NCIMB 11848 / C-107).